The primary structure comprises 676 residues: RNA helicase NPH-II (676 aa).

Residues 172–347 (FSAWISHRPV…VFLPNPAFIH (176 aa)) enclose the Helicase ATP-binding domain. Residue 185 to 192 (GGTGVGKT) coordinates ATP. The short motif at 296–299 (DEVH) is the DEXH box element. Residues 366 to 542 (NPSSRMAYIE…KFNLTLPEDL (177 aa)) form the Helicase C-terminal domain.

Belongs to the DEAD box helicase family. DEAH subfamily. As to quaternary structure, monomer.

The protein resides in the virion. It carries out the reaction ATP + H2O = ADP + phosphate + H(+). NTP-dependent helicase that catalyzes unidirectional unwinding of 3'tailed duplex RNAs and plays an important role during transcription of early mRNAs, presumably by preventing R-loop formation behind the elongating RNA polymerase. Might also play a role in the export of newly synthesized mRNA chains out of the core into the cytoplasm. Required for replication and propagation of viral particles. The sequence is that of RNA helicase NPH-II (OPG084) from Homo sapiens (Human).